Reading from the N-terminus, the 259-residue chain is 5'-nucleotidase SurE (259 aa).

Residues aspartate 8, aspartate 9, serine 41, and asparagine 93 each contribute to the a divalent metal cation site.

This sequence belongs to the SurE nucleotidase family. It depends on a divalent metal cation as a cofactor.

The protein localises to the cytoplasm. It catalyses the reaction a ribonucleoside 5'-phosphate + H2O = a ribonucleoside + phosphate. Its function is as follows. Nucleotidase that shows phosphatase activity on nucleoside 5'-monophosphates. This Verminephrobacter eiseniae (strain EF01-2) protein is 5'-nucleotidase SurE.